The sequence spans 314 residues: MLDFEKPLFEIRNKIESLKESQDKNDVDLQEEIDMLEASLERETKKIYTNLKPWDRVQIARLQERPTTLDYIPYIFDSFMELHGDRNFRDDPAMIGGIGFLNGRAVTVIGQQRGKDTKDNIYRNFGMAHPEGYRKALRLMKQAEKFNRPIFTFIDTKGAYPGKAAEERGQSESIATNLIEMASLKVPVIAIVIGEGGSGGALGIGIANKVLMLENSTYSVISPEGAAALLWKDSNLAKIAAETMKITAHDIKQLGIIDDVISEPLGGAHKDIEQQALAIKSAFVEQLDSLESLSRDEIANDRFEKFRNIGSYIE.

The CoA carboxyltransferase C-terminal domain occupies 32-289 (EIDMLEASLE…KSAFVEQLDS (258 aa)).

The protein belongs to the AccA family. As to quaternary structure, acetyl-CoA carboxylase is a heterohexamer composed of biotin carboxyl carrier protein (AccB), biotin carboxylase (AccC) and two subunits each of ACCase subunit alpha (AccA) and ACCase subunit beta (AccD).

The protein localises to the cytoplasm. It carries out the reaction N(6)-carboxybiotinyl-L-lysyl-[protein] + acetyl-CoA = N(6)-biotinyl-L-lysyl-[protein] + malonyl-CoA. Its pathway is lipid metabolism; malonyl-CoA biosynthesis; malonyl-CoA from acetyl-CoA: step 1/1. Its function is as follows. Component of the acetyl coenzyme A carboxylase (ACC) complex. First, biotin carboxylase catalyzes the carboxylation of biotin on its carrier protein (BCCP) and then the CO(2) group is transferred by the carboxyltransferase to acetyl-CoA to form malonyl-CoA. The protein is Acetyl-coenzyme A carboxylase carboxyl transferase subunit alpha of Staphylococcus aureus (strain bovine RF122 / ET3-1).